Reading from the N-terminus, the 503-residue chain is MTVRTRVAPSPTGDPHVGTAYIALFNLCFARKHGGQFILRIEDTDQSRSTPESEQAILDSLRWLGLEWDEGPDVGGAAGPYRQSERKEIYAQYVQQLLDAGHAFKCYRTTEELDMLRAARKEAGIHSALKQSDLMLTEQEQAEREAAGIPYVVRMKVPEEEGACQVTDLLRGNIDLDWSMVDAQILMKSDGMPTYHLANVVDDHLMKITHVIRGEEWINSAPKHILLYQYFGWDVPVFCHLPLLRNPDKTKLSKRKNPTSILYYKQAGYLPEALTNYLGRMGWSMPDESEKFSIQEMLNHFDIARVSLGGPVFDIEKLNWLNGLWIREDLDDAALAQRLVDWKFNQDNLLAVIPHVKQRMETLGDFLPMVSFLAANTLGITEESFKGNKLDLEDQKKVLQFALWQLDTMRTWERDDIFATLKGLADGMGIKLKDFLAPLFVAISGSTASFSVMDAMVLLGSDLSRARLRVAVEVLGGAGKKVLKRYEKEFAALSQLNEESDAE.

A 'HIGH' region motif is present at residues 9–19 (PSPTGDPHVGT). Positions 251 to 255 (KLSKR) match the 'KMSKS' region motif. Position 254 (Lys254) interacts with ATP.

It belongs to the class-I aminoacyl-tRNA synthetase family. Glutamate--tRNA ligase type 1 subfamily. In terms of assembly, monomer.

It localises to the cytoplasm. The enzyme catalyses tRNA(Glu) + L-glutamate + ATP = L-glutamyl-tRNA(Glu) + AMP + diphosphate. In terms of biological role, catalyzes the attachment of glutamate to tRNA(Glu) in a two-step reaction: glutamate is first activated by ATP to form Glu-AMP and then transferred to the acceptor end of tRNA(Glu). The protein is Glutamate--tRNA ligase of Saccharophagus degradans (strain 2-40 / ATCC 43961 / DSM 17024).